The sequence spans 1163 residues: Reticulon-4 (1163 aa).

Met-1 is modified (N-acetylmethionine). 2 disordered regions span residues 1 to 184 (MEDI…AASE) and 244 to 270 (SAVSSSEGTIEETLNEASKELPERATN). Residues 1 to 989 (MEDIDQSSLV…LYWRDIKKTG (989 aa)) lie on the Cytoplasmic side of the membrane. Residues Ser-7 and Ser-16 each carry the phosphoserine modification. The segment covering 7-16 (SSLVSSSTDS) has biased composition (low complexity). Over residues 31-55 (EPEDEEDEEEEEDEEEDDEDLEELE) the composition is skewed to acidic residues. Positions 62 to 79 (AAGLSAAAVPPAAAAPLL) are enriched in low complexity. Pro residues predominate over residues 87–101 (PPAPRGPLPAAPPAA). Ser-107 is subject to Phosphoserine. A compositionally biased stretch (pro residues) spans 138–147 (ARPPPPPPAG). A phosphoserine mark is found at Ser-149, Ser-169, and Ser-171. Ser-329, Ser-333, and Ser-343 each carry phosphoserine. Thr-347 is subject to Phosphothreonine. Residues 406-423 (DSLEQKSLGKDSEGRNED) are compositionally biased toward basic and acidic residues. Disordered stretches follow at residues 406-437 (DSLEQKSLGKDSEGRNEDASFPSTPEPVKDSS) and 454-474 (TANTFPLLEDHTSENKTDEKK). Residue Ser-425 is modified to Phosphoserine. Thr-429 is subject to Phosphothreonine. Residues 461-474 (LEDHTSENKTDEKK) are compositionally biased toward basic and acidic residues. Ser-488, Ser-689, Ser-726, Ser-766, and Ser-830 each carry phosphoserine. Thr-832 carries the post-translational modification Phosphothreonine. 3 positions are modified to phosphoserine: Ser-855, Ser-922, and Ser-962. The region spanning 976–1163 (VVDLLYWRDI…KIPGLKRKAD (188 aa)) is the Reticulon domain. Residues 990–1010 (VVFGASLFLLLSLTVFSIVSV) traverse the membrane as a helical segment. The Lumenal segment spans residues 1011–1104 (TAYIALALLS…LMWVFTYVGA (94 aa)). Lys-1075 is modified (N6-acetyllysine). A helical membrane pass occupies residues 1105-1125 (LFNGLTLLILALISLFSIPVI). Over 1126 to 1163 (YERHQVQIDHYLGLANKSVKDAMAKIQAKIPGLKRKAD) the chain is Cytoplasmic.

Binds to RTN4R. Interacts with ATL1. Interacts with TMEM170A. Interacts with RTN4IP1. In terms of assembly, interacts in trans with CNTNAP1. Interacts with REEP5. Interacts with synaptic plasticity regulator PANTS; the interaction results in enhanced RTN4-mediated inhibition of AMPA receptor clustering. Interacts with GPR50. As to quaternary structure, homodimer. Interacts with BAD/Bcl-xl and BCL2. Interact with RTN3. Interacts with NGBR. Interacts with SPTLC1. Interacts with GRAMD4. Interacts with CDH5. Interacts with BACE1 and BACE2. Interacts with REEP5. Interacts with RETREG3. Interacts with BACE1 and BACE2. Interacts with TMEM33. Isoforms A, B and C are present in optic nerve, spinal cord and cerebral cortex. Isoforms A and B are present in dorsal root ganglion, sciatic nerve and PC12 cells after longer exposure. Isoforms B and C are detected in kidney, cartilage, skin, lung and spleen. Isoform C is expressed at high level in skeletal muscle. In adult animals isoform A is expressed mainly in the nervous system.

Its subcellular location is the endoplasmic reticulum membrane. The protein localises to the cell membrane. It is found in the synapse. The protein resides in the cell junction. Its function is as follows. Required to induce the formation and stabilization of endoplasmic reticulum (ER) tubules. They regulate membrane morphogenesis in the ER by promoting tubular ER production. They influence nuclear envelope expansion, nuclear pore complex formation and proper localization of inner nuclear membrane proteins. However each isoform have specific functions mainly depending on their tissue expression specificities. Developmental neurite growth regulatory factor with a role as a negative regulator of axon-axon adhesion and growth, and as a facilitator of neurite branching. Regulates neurite fasciculation, branching and extension in the developing nervous system. Involved in down-regulation of growth, stabilization of wiring and restriction of plasticity in the adult CNS. Regulates the radial migration of cortical neurons via an RTN4R-LINGO1 containing receptor complex. Acts as a negative regulator of central nervous system angiogenesis. Inhibits spreading, migration and sprouting of primary brain microvascular endothelial cells (MVECs). Also induces the retraction of MVECs lamellipodia and filopodia in a ROCK pathway-dependent manner. Functionally, mainly function in endothelial cells and vascular smooth muscle cells, is also involved in immune system regulation. Modulator of vascular remodeling, promotes the migration of endothelial cells but inhibits the migration of vascular smooth muscle cells. Regulates endothelial sphingolipid biosynthesis with direct effects on vascular function and blood pressure. Inhibits serine palmitoyltransferase, SPTLC1, the rate-limiting enzyme of the novo sphingolipid biosynthetic pathway, thereby controlling production of endothelial sphingosine-1-phosphate (S1P). Required to promote macrophage homing and functions such as cytokine/chemokine gene expression involved in angiogenesis, arteriogenesis and tissue repair. Mediates ICAM1 induced transendothelial migration of leukocytes such as monocytes and neutrophils and acute inflammation. Necessary for immune responses triggered by nucleic acid sensing TLRs, such as TLR9, is required for proper TLR9 location to endolysosomes. Also involved in immune response to LPS. Plays a role in liver regeneration through the modulation of hepatocytes proliferation. Reduces the anti-apoptotic activity of Bcl-xl and Bcl-2. This is likely consecutive to their change in subcellular location, from the mitochondria to the endoplasmic reticulum, after binding and sequestration. With isoform C, inhibits BACE1 activity and amyloid precursor protein processing. In terms of biological role, regulates cardiomyocyte apoptosis upon hypoxic conditions. With isoform B, inhibits BACE1 activity and amyloid precursor protein processing. This Rattus norvegicus (Rat) protein is Reticulon-4 (Rtn4).